A 611-amino-acid chain; its full sequence is Procollagen galactosyltransferase 1-A (611 aa).

An N-terminal signal peptide occupies residues 1–24 (MSQAGVDRLLRGLQLLLLVLRLSA). 5 N-linked (GlcNAc...) asparagine glycosylation sites follow: asparagine 85, asparagine 173, asparagine 312, asparagine 370, and asparagine 568. Basic and acidic residues predominate over residues 575–591 (WDRAKSRKTQQQEKLRS). The disordered stretch occupies residues 575 to 611 (WDRAKSRKTQQQEKLRSEALNSPSLGSPFDNTARDEL). The Prevents secretion from ER signature appears at 608-611 (RDEL).

It belongs to the glycosyltransferase 25 family.

It localises to the endoplasmic reticulum lumen. It carries out the reaction (5R)-5-hydroxy-L-lysyl-[collagen] + UDP-alpha-D-galactose = (5R)-5-O-(beta-D-galactosyl)-5-hydroxy-L-lysyl-[collagen] + UDP + H(+). Its function is as follows. Beta-galactosyltransferase that transfers beta-galactose to hydroxylysine residues of type I collagen. By acting on collagen glycosylation, facilitates the formation of collagen triple helix. The polypeptide is Procollagen galactosyltransferase 1-A (colgalt1-a) (Xenopus laevis (African clawed frog)).